Reading from the N-terminus, the 642-residue chain is Chaperone protein DnaK (642 aa).

T198 carries the post-translational modification Phosphothreonine; by autocatalysis. A compositionally biased stretch (basic and acidic residues) spans 578 to 589; that stretch reads DDKEAIESRMQK. Positions 578 to 642 are disordered; the sequence is DDKEAIESRM…FEEVKDGDKK (65 aa). Residues 603-619 are compositionally biased toward low complexity; it reads AEQAAQQGGDAGAQAED.

Belongs to the heat shock protein 70 family.

In terms of biological role, acts as a chaperone. This Hahella chejuensis (strain KCTC 2396) protein is Chaperone protein DnaK.